The primary structure comprises 676 residues: Envelope glycoprotein (676 aa).

The first 32 residues, 1–32 (MGVTGILQLPRDRFKRTSFFLWVIILFQRTFS), serve as a signal peptide directing secretion. Residues 33-650 (IPLGVIHNST…NDNWWTGWRQ (618 aa)) lie on the Extracellular side of the membrane. N40 carries N-linked (GlcNAc...) asparagine; by host glycosylation. 5 disulfides stabilise this stretch: C53/C609, C108/C135, C121/C147, C511/C556, and C601/C608. The segment at 54–201 (RDKLSSTNQL…DFFSSHPLRE (148 aa)) is receptor-binding. 11 N-linked (GlcNAc...) asparagine; by host glycosylation sites follow: N204, N228, N238, N257, N268, N296, N317, N333, N346, N386, and N413. The interval 305-485 (ELSFTVVSNG…SGKLGLITNT (181 aa)) is mucin-like region. Polar residues predominate over residues 315–335 (AKNISGQSPARTSSDPGTNTT). The interval 315–337 (AKNISGQSPARTSSDPGTNTTTE) is disordered. Residues 373 to 391 (TSPQSLTTKPGPDNSTHNT) show a composition bias toward polar residues. Disordered regions lie at residues 373 to 392 (TSPQ…HNTP) and 402 to 479 (TQVE…SGKL). The segment covering 414 to 432 (DSTASDTPSATTAAGPPKA) has biased composition (low complexity). The span at 433–464 (ENTNTSKSTDFLDPATTTSPQNHSETAGNNNT) shows a compositional bias: polar residues. N-linked (GlcNAc...) asparagine; by host glycosylation is found at N436, N454, and N462. Positions 524–539 (GAAIGLAWIPYFGPAA) are fusion peptide. A coiled-coil region spans residues 554-595 (LICGLRQLANETTQALQLFLRATTELRTFSILNRKAIDFLLQ). A glycan (N-linked (GlcNAc...) asparagine; by host) is linked at N563. Residues 615 to 634 (WTKNITDKIDQIIHDFVDKT) adopt a coiled-coil conformation. N618 carries N-linked (GlcNAc...) asparagine; by host glycosylation. A helical membrane pass occupies residues 651 to 671 (WIPAGIGVTGVIIAVIALFCI). Residues 660-664 (GVIIA) carry the Important role for host BST2/tetherin antagonism motif. S-palmitoyl cysteine; by host attachment occurs at residues C670 and C672. Residues 672 to 676 (CKFVF) lie on the Cytoplasmic side of the membrane.

It belongs to the filoviruses glycoprotein family. Homotrimer; each monomer consists of a GP1 and a GP2 subunit linked by disulfide bonds. The resulting peplomers (GP1,2) protrude from the virus surface as spikes. Interacts with host integrin alpha-V/ITGAV. Interacts with host CLEC10A. Also binds to host CD209 and CLEC4M/DC-SIGN(R). Interacts with host FOLR1. Interacts with BST2; this interaction inhibits the antiviral effect of BST2 and this allows viral release from infected cells. Interacts with host FCN1; this interaction enhances viral entry. Interacts with host TLR4; this interaction induces cell death in T-lymphocytes or proinflammatory cytokines and SOCS1 production in monocytes. In terms of assembly, interacts with host entry receptor NPC1. As to quaternary structure, GP1 and GP2delta are part of GP1,2delta soluble complexes released by ectodomain shedding. Post-translationally, the signal peptide region modulates GP's high mannose glycosylation, thereby determining the efficiency of the interactions with DC-SIGN(R). N-glycosylated. In terms of processing, glycosylated; glycosylation is essential for the activation of dendritic cells and macrophages. Post-translationally, O-glycosylated in the mucin-like region. Palmitoylation is not required for its function. In terms of processing, specific enzymatic cleavages in vivo yield mature proteins. The precursor is processed into GP1 and GP2 by host cell furin in the trans Golgi, and maybe by other host proteases, to yield the mature GP1 and GP2 proteins. The cleavage site corresponds to the furin optimal cleavage sequence [KR]-X-[KR]-R. This cleavage does not seem to be required for function. After the internalization of the virus into cell endosomes, GP1 C-terminus is removed by the endosomal proteases cathepsin B, cathepsin L, or both, leaving a 19-kDa N-terminal fragment which is further digested by cathepsin B. This cleaved 19-kDa GP1 can then bind to the host entry receptor NPC1. Proteolytic processing of GP1,2 by host ADAM17 can remove the transmembrane anchor of GP2 and leads to shedding of complexes consisting in GP1 and truncated GP2 (GP1,2delta).

The protein localises to the virion membrane. The protein resides in the host cell membrane. Its subcellular location is the secreted. Trimeric GP1,2 complexes form the virion surface spikes and mediate the viral entry processes, with GP1 acting as the receptor-binding subunit and GP2 as the membrane fusion subunit. At later times of infection, down-regulates the expression of various host cell surface molecules that are essential for immune surveillance and cell adhesion. Down-modulates several integrins including ITGA1, ITGA2, ITGA3, ITGA4, ITGA5, ITGA6, ITGAV and ITGB1. This decrease in cell adhesion molecules may lead to cell detachment, contributing to the disruption of blood vessel integrity and hemorrhages developed during infection (cytotoxicity). Interacts with host TLR4 and thereby stimulates the differentiation and activation of monocytes leading to bystander death of T-lymphocytes. Down-regulates as well the function of host natural killer cells. Counteracts the antiviral effect of host BST2/tetherin that restricts release of progeny virions from infected cells. However, cooperates with VP40 and host BST2 to activate canonical NF-kappa-B pathway in a manner dependent on neddylation. Functionally, functions as a decoy for anti-GP1,2 antibodies thereby contributing to viral immune evasion. Interacts and activates host macrophages and dendritic cells inducing up-regulation of cytokine transcription. This effect is mediated throught activation of host TLR4. Its function is as follows. Responsible for binding to the receptor(s) on target cells. Interacts with CD209/DC-SIGN and CLEC4M/DC-SIGNR which act as cofactors for virus entry into dendritic cells (DCs) and endothelial cells. Binding to the macrophage specific lectin CLEC10A also seems to enhance virus infectivity. Interaction with FOLR1/folate receptor alpha may be a cofactor for virus entry in some cell types, although results are contradictory. Members of the Tyro3 receptor tyrosine kinase family also seem to be cell entry factors in filovirus infection. Once attached, the virions are internalized through clathrin-dependent endocytosis and/or macropinocytosis. After internalization of the virus into the endosomes of the host cell, proteolysis of GP1 by two cysteine proteases, CTSB/cathepsin B and CTSL/cathepsin L removes the glycan cap and allows GP1 binding to the host entry receptor NPC1. NPC1-binding, Ca(2+) and acidic pH induce a conformational change of GP2, which unmasks its fusion peptide and permit membranes fusion. In terms of biological role, acts as a class I viral fusion protein. Under the current model, the protein has at least 3 conformational states: pre-fusion native state, pre-hairpin intermediate state, and post-fusion hairpin state. During viral and target cell membrane fusion, the coiled coil regions (heptad repeats) assume a trimer-of-hairpins structure, positioning the fusion peptide in close proximity to the C-terminal region of the ectodomain. The formation of this structure appears to drive apposition and subsequent fusion of viral and target cell membranes. Responsible for penetration of the virus into the cell cytoplasm by mediating the fusion of the membrane of the endocytosed virus particle with the endosomal membrane. Low pH in endosomes induces an irreversible conformational change in GP2, releasing the fusion hydrophobic peptide. The sequence is that of Envelope glycoprotein (GP) from Epomops franqueti (Franquet's epauletted fruit bat).